Here is a 223-residue protein sequence, read N- to C-terminus: Deoxyribose-phosphate aldolase (223 aa).

Residue Asp-91 is the Proton donor/acceptor of the active site. Residue Lys-153 is the Schiff-base intermediate with acetaldehyde of the active site. Lys-182 (proton donor/acceptor) is an active-site residue.

The protein belongs to the DeoC/FbaB aldolase family. DeoC type 1 subfamily.

It localises to the cytoplasm. The catalysed reaction is 2-deoxy-D-ribose 5-phosphate = D-glyceraldehyde 3-phosphate + acetaldehyde. Its pathway is carbohydrate degradation; 2-deoxy-D-ribose 1-phosphate degradation; D-glyceraldehyde 3-phosphate and acetaldehyde from 2-deoxy-alpha-D-ribose 1-phosphate: step 2/2. Functionally, catalyzes a reversible aldol reaction between acetaldehyde and D-glyceraldehyde 3-phosphate to generate 2-deoxy-D-ribose 5-phosphate. The protein is Deoxyribose-phosphate aldolase of Yersinia enterocolitica serotype O:8 / biotype 1B (strain NCTC 13174 / 8081).